Here is a 359-residue protein sequence, read N- to C-terminus: DNA polymerase IV (359 aa).

Residues 4–185 form the UmuC domain; sequence IIHIDMDCYF…LSLRKIPGVG (182 aa). Mg(2+) contacts are provided by aspartate 8 and aspartate 103. The active site involves glutamate 104.

It belongs to the DNA polymerase type-Y family. As to quaternary structure, monomer. Mg(2+) serves as cofactor.

Its subcellular location is the cytoplasm. It carries out the reaction DNA(n) + a 2'-deoxyribonucleoside 5'-triphosphate = DNA(n+1) + diphosphate. Poorly processive, error-prone DNA polymerase involved in untargeted mutagenesis. Copies undamaged DNA at stalled replication forks, which arise in vivo from mismatched or misaligned primer ends. These misaligned primers can be extended by PolIV. Exhibits no 3'-5' exonuclease (proofreading) activity. May be involved in translesional synthesis, in conjunction with the beta clamp from PolIII. The polypeptide is DNA polymerase IV (Shewanella sp. (strain MR-4)).